The chain runs to 114 residues: ATP-dependent Clp protease adapter protein ClpS (114 aa).

This sequence belongs to the ClpS family. Binds to the N-terminal domain of the chaperone ClpA.

Involved in the modulation of the specificity of the ClpAP-mediated ATP-dependent protein degradation. The chain is ATP-dependent Clp protease adapter protein ClpS from Bdellovibrio bacteriovorus (strain ATCC 15356 / DSM 50701 / NCIMB 9529 / HD100).